The primary structure comprises 563 residues: CTP synthase (563 aa).

The segment at 1–280 (MTKFVFVTGG…DEMICMKLQL (280 aa)) is amidoligase domain. CTP is bound at residue serine 13. Residue serine 13 coordinates UTP. ATP-binding positions include 14 to 19 (SLGKGI) and aspartate 71. 2 residues coordinate Mg(2+): aspartate 71 and glutamate 154. Residues 161-163 (DIE), 201-206 (KTKPTQ), and lysine 237 each bind CTP. UTP-binding positions include 201 to 206 (KTKPTQ) and lysine 237. A Glutamine amidotransferase type-1 domain is found at 305–557 (TIAMAGKYTE…IAAALEHHAA (253 aa)). Residue glycine 366 coordinates L-glutamine. Residue cysteine 393 is the Nucleophile; for glutamine hydrolysis of the active site. L-glutamine contacts are provided by residues 394–397 (LGMQ), glutamate 417, and arginine 483. Residues histidine 530 and glutamate 532 contribute to the active site.

It belongs to the CTP synthase family. In terms of assembly, homotetramer.

The catalysed reaction is UTP + L-glutamine + ATP + H2O = CTP + L-glutamate + ADP + phosphate + 2 H(+). It catalyses the reaction L-glutamine + H2O = L-glutamate + NH4(+). It carries out the reaction UTP + NH4(+) + ATP = CTP + ADP + phosphate + 2 H(+). It participates in pyrimidine metabolism; CTP biosynthesis via de novo pathway; CTP from UDP: step 2/2. Its activity is regulated as follows. Allosterically activated by GTP, when glutamine is the substrate; GTP has no effect on the reaction when ammonia is the substrate. The allosteric effector GTP functions by stabilizing the protein conformation that binds the tetrahedral intermediate(s) formed during glutamine hydrolysis. Inhibited by the product CTP, via allosteric rather than competitive inhibition. In terms of biological role, catalyzes the ATP-dependent amination of UTP to CTP with either L-glutamine or ammonia as the source of nitrogen. Regulates intracellular CTP levels through interactions with the four ribonucleotide triphosphates. The protein is CTP synthase of Leptothrix cholodnii (strain ATCC 51168 / LMG 8142 / SP-6) (Leptothrix discophora (strain SP-6)).